A 63-amino-acid polypeptide reads, in one-letter code: Large ribosomal subunit protein uL29 (63 aa).

The protein belongs to the universal ribosomal protein uL29 family.

This is Large ribosomal subunit protein uL29 from Pseudoalteromonas translucida (strain TAC 125).